A 629-amino-acid chain; its full sequence is tRNA uridine 5-carboxymethylaminomethyl modification enzyme MnmG (629 aa).

Residues glycine 14 to glycine 19, valine 126, and serine 181 each bind FAD. Residue glycine 273–phenylalanine 287 participates in NAD(+) binding. Glutamine 370 contributes to the FAD binding site.

This sequence belongs to the MnmG family. In terms of assembly, homodimer. Heterotetramer of two MnmE and two MnmG subunits. The cofactor is FAD.

The protein localises to the cytoplasm. Functionally, NAD-binding protein involved in the addition of a carboxymethylaminomethyl (cmnm) group at the wobble position (U34) of certain tRNAs, forming tRNA-cmnm(5)s(2)U34. The protein is tRNA uridine 5-carboxymethylaminomethyl modification enzyme MnmG of Bacillus cereus (strain ZK / E33L).